Here is a 160-residue protein sequence, read N- to C-terminus: Glyoxalase domain-containing protein 5 (160 aa).

In terms of domain architecture, VOC spans 33-153; that stretch reads RLDHLVLTVR…DQNLIEVSNY (121 aa).

This sequence belongs to the glyoxalase I family.

This is Glyoxalase domain-containing protein 5 (glod5) from Xenopus tropicalis (Western clawed frog).